Reading from the N-terminus, the 626-residue chain is Phosphomethylpyrimidine synthase (626 aa).

Substrate-binding positions include Asn-237, Met-266, Tyr-295, His-331, 351–353 (SRG), 392–395 (DGLR), and Glu-431. Zn(2+) is bound at residue His-435. Tyr-458 is a substrate binding site. His-499 contacts Zn(2+). The [4Fe-4S] cluster site is built by Cys-579, Cys-582, and Cys-587.

It belongs to the ThiC family. As to quaternary structure, homodimer. Requires [4Fe-4S] cluster as cofactor.

The enzyme catalyses 5-amino-1-(5-phospho-beta-D-ribosyl)imidazole + S-adenosyl-L-methionine = 4-amino-2-methyl-5-(phosphooxymethyl)pyrimidine + CO + 5'-deoxyadenosine + formate + L-methionine + 3 H(+). It functions in the pathway cofactor biosynthesis; thiamine diphosphate biosynthesis. Functionally, catalyzes the synthesis of the hydroxymethylpyrimidine phosphate (HMP-P) moiety of thiamine from aminoimidazole ribotide (AIR) in a radical S-adenosyl-L-methionine (SAM)-dependent reaction. The chain is Phosphomethylpyrimidine synthase from Cupriavidus necator (strain ATCC 17699 / DSM 428 / KCTC 22496 / NCIMB 10442 / H16 / Stanier 337) (Ralstonia eutropha).